The sequence spans 312 residues: Olfactory receptor 6B2 (312 aa).

Over 1 to 25 the chain is Extracellular; sequence MSGENVTKVSTFILVGLPTAPGLQY. The N-linked (GlcNAc...) asparagine glycan is linked to Asn5. Residues 26-46 form a helical membrane-spanning segment; sequence LLFLLFLLTYLFVLVENLAII. Residues 47-54 are Cytoplasmic-facing; the sequence is LIVWSSTS. A helical transmembrane segment spans residues 55–75; the sequence is LHRPMYYFLSSMSFLEIWYVS. Topologically, residues 76 to 99 are extracellular; the sequence is DITPKMLEGFLLQQKRISFVGCMT. An intrachain disulfide couples Cys97 to Cys189. The helical transmembrane segment at 100–120 threads the bilayer; that stretch reads QLYFFSSLVCTECVLLASMAY. Residues 121 to 139 lie on the Cytoplasmic side of the membrane; the sequence is DRYVAICHPLRYHVLVTPG. Residues 140 to 160 traverse the membrane as a helical segment; sequence LCLQLVGFSFVSGFTISMIKV. Residues 161–196 are Extracellular-facing; the sequence is CFISSVTFCGSNVLNHFFCDISPILKLACTDFSTAE. A helical membrane pass occupies residues 197–217; sequence LVDFILAFIILVFPLLATILS. Residues 218-237 lie on the Cytoplasmic side of the membrane; it reads YWHITLAVLRIPSATGCWRA. The helical transmembrane segment at 238 to 258 threads the bilayer; the sequence is FSTCASHLTVVTVFYTALLFM. Residues 259–271 lie on the Extracellular side of the membrane; the sequence is YVRPQAIDSQSSN. The chain crosses the membrane as a helical span at residues 272–292; sequence KLISAVYTVVTPIINPLIYCL. Topologically, residues 293-312 are cytoplasmic; it reads RNKEFKDALKKALGLGQTSH.

It belongs to the G-protein coupled receptor 1 family.

The protein resides in the cell membrane. Odorant receptor. The polypeptide is Olfactory receptor 6B2 (OR6B2) (Homo sapiens (Human)).